The primary structure comprises 221 residues: UPF0319 protein NTHI1987 (221 aa).

Positions 1–21 (MKLRAVVLGLATLCTSTATFA) are cleaved as a signal peptide.

Belongs to the UPF0319 family.

This Haemophilus influenzae (strain 86-028NP) protein is UPF0319 protein NTHI1987.